The sequence spans 220 residues: Metalloproteinase inhibitor 2 (220 aa).

Residues 1–26 (MGATARSLRLALGLLLLGTLPRGADA) form the signal peptide. Residue C27 coordinates Zn(2+). Involved in metalloproteinase-binding regions lie at residues 27 to 30 (CSCS) and 95 to 96 (SA). 6 cysteine pairs are disulfide-bonded: C27-C98, C29-C127, C39-C152, C154-C201, C159-C164, and C172-C193. In terms of domain architecture, NTR spans 27-152 (CSCSPVHPQQ…SLNHRYQMGC (126 aa)).

It belongs to the protease inhibitor I35 (TIMP) family. As to quaternary structure, interacts (via the C-terminal) with MMP2 (via the C-terminal PEX domain); the interaction inhibits the MMP2 activity. In terms of processing, the activity of TIMP2 is dependent on the presence of disulfide bonds. Predominantly expressed in the lung in alveolar macrophages and epithelial cells. Also found in brain, kidney, intestine, spleen and heart.

It localises to the secreted. Complexes with metalloproteinases (such as collagenases) and irreversibly inactivates them by binding to their catalytic zinc cofactor. This chain is Metalloproteinase inhibitor 2 (TIMP2), found in Cavia porcellus (Guinea pig).